A 428-amino-acid chain; its full sequence is Putative ankyrin repeat protein FPV234 (428 aa).

8 ANK repeats span residues 6–35, 39–68, 71–100, 103–132, 137–169, 174–202, 206–238, and 242–271; these read KDDI…DPNV, YQYS…DPNI, FFTP…IVNL, YCLK…DINS, NGKY…DINK, TNTS…NINI, MGRN…DINA, and EGNT…YLSY.

The sequence is that of Putative ankyrin repeat protein FPV234 from Fowlpox virus (strain NVSL) (FPV).